Reading from the N-terminus, the 115-residue chain is NADH-ubiquinone oxidoreductase chain 3 (115 aa).

3 helical membrane passes run 4 to 24, 55 to 75, and 84 to 104; these read ALTLFTNTALASLLVLIAFWL, FFLVAITFLLFDLEIALLLPL, and LTTMLTMALLLISLLAASLAY.

This sequence belongs to the complex I subunit 3 family. In terms of assembly, core subunit of respiratory chain NADH dehydrogenase (Complex I) which is composed of 45 different subunits. Interacts with TMEM186. Interacts with TMEM242.

The protein resides in the mitochondrion inner membrane. It catalyses the reaction a ubiquinone + NADH + 5 H(+)(in) = a ubiquinol + NAD(+) + 4 H(+)(out). Functionally, core subunit of the mitochondrial membrane respiratory chain NADH dehydrogenase (Complex I) which catalyzes electron transfer from NADH through the respiratory chain, using ubiquinone as an electron acceptor. Essential for the catalytic activity of complex I. The polypeptide is NADH-ubiquinone oxidoreductase chain 3 (Phoca vitulina (Harbor seal)).